A 543-amino-acid polypeptide reads, in one-letter code: MNAIGNFLVGTPVFTIFICLALGYLLGKLKIGSFTLGATVGVLIVALLIGQLGVFPRDTLLGDIFFDFFMFAIGYRVGPSFISSMKKFGAKIVYATLIFLVSAFIVAYACFKMFHIGPGIAAGIIAGGLTQSAVIGSSLETISKLPISDHLKTLYSNQIPIVYTLTYVFGTIGVLIFLRDIMPKLMHIDLKKQAVKTAKELDMIPVPVIVASTHFYTINDGSSLIGQTLGTVNTKFAKGLVAAGLNDSADMASVINAGDVLAISGGIDEIGRAVQEFNLLEVTGKTKAYVSKQVVLKKNFSADVLKNAQDKGVLVATLAGDVMDPAQFSTLKPAESVTLVGQKDAVSEVQSQLGRLRAAENIINYSWFALGIALSAALGIVGTKVSGVPIALGGGTASLIVGLVQSIYRDKHAHMDTIPDSLLEFFQSIGLNLFIATVGLSAAKTFISAIQSMGISVLLIGAVISILPHIITFVICYYLMKMEPISIIGAQTGADTLSAALNDVSERVGSDASPFFAAAVAPAYAIGNIFLTLMGPIFIVLLS.

The next 10 helical transmembrane spans lie at 4–26, 33–55, 88–110, 117–139, 159–178, 362–381, 385–407, 428–450, 455–477, and 520–542; these read IGNF…GYLL, SFTL…LGVF, FGAK…AYAC, GPGI…GSSL, IPIV…LIFL, IINY…LGIV, VSGV…VQSI, SIGL…ISAI, ISVL…VICY, and VAPA…IVLL.

It belongs to the AAE transporter (TC 2.A.81) family.

It localises to the cell membrane. Its function is as follows. Catalyzes the electrogenic exchange of aspartate with alanine. The polypeptide is Aspartate/alanine antiporter (aspT) (Tetragenococcus halophilus (Pediococcus halophilus)).